The following is a 161-amino-acid chain: 2-C-methyl-D-erythritol 2,4-cyclodiphosphate synthase (161 aa).

Residues Asp10 and His12 each contribute to the a divalent metal cation site. 4-CDP-2-C-methyl-D-erythritol 2-phosphate contacts are provided by residues 10–12 (DVH) and 36–37 (HS). Residue His44 coordinates a divalent metal cation. 4-CDP-2-C-methyl-D-erythritol 2-phosphate is bound by residues 58-60 (DIG), 63-67 (FSDTD), and Arg144.

It belongs to the IspF family. As to quaternary structure, homotrimer. It depends on a divalent metal cation as a cofactor.

It carries out the reaction 4-CDP-2-C-methyl-D-erythritol 2-phosphate = 2-C-methyl-D-erythritol 2,4-cyclic diphosphate + CMP. The protein operates within isoprenoid biosynthesis; isopentenyl diphosphate biosynthesis via DXP pathway; isopentenyl diphosphate from 1-deoxy-D-xylulose 5-phosphate: step 4/6. In terms of biological role, involved in the biosynthesis of isopentenyl diphosphate (IPP) and dimethylallyl diphosphate (DMAPP), two major building blocks of isoprenoid compounds. Catalyzes the conversion of 4-diphosphocytidyl-2-C-methyl-D-erythritol 2-phosphate (CDP-ME2P) to 2-C-methyl-D-erythritol 2,4-cyclodiphosphate (ME-CPP) with a corresponding release of cytidine 5-monophosphate (CMP). The protein is 2-C-methyl-D-erythritol 2,4-cyclodiphosphate synthase of Burkholderia cenocepacia (strain HI2424).